The primary structure comprises 370 residues: 4-hydroxy-3-methylbut-2-en-1-yl diphosphate synthase (flavodoxin) (370 aa).

[4Fe-4S] cluster-binding residues include Cys-268, Cys-271, Cys-303, and Glu-310.

It belongs to the IspG family. It depends on [4Fe-4S] cluster as a cofactor.

It carries out the reaction (2E)-4-hydroxy-3-methylbut-2-enyl diphosphate + oxidized [flavodoxin] + H2O + 2 H(+) = 2-C-methyl-D-erythritol 2,4-cyclic diphosphate + reduced [flavodoxin]. It participates in isoprenoid biosynthesis; isopentenyl diphosphate biosynthesis via DXP pathway; isopentenyl diphosphate from 1-deoxy-D-xylulose 5-phosphate: step 5/6. In terms of biological role, converts 2C-methyl-D-erythritol 2,4-cyclodiphosphate (ME-2,4cPP) into 1-hydroxy-2-methyl-2-(E)-butenyl 4-diphosphate. In Bacillus cereus (strain G9842), this protein is 4-hydroxy-3-methylbut-2-en-1-yl diphosphate synthase (flavodoxin).